A 341-amino-acid polypeptide reads, in one-letter code: L-threonine 3-dehydrogenase (341 aa).

C38 serves as a coordination point for Zn(2+). Active-site charge relay system residues include T40 and H43. Zn(2+)-binding residues include H63, E64, C93, C96, C99, and C107. Residues I175, D195, R200, 262–264, and 286–287 each bind NAD(+); these read LGI and IY.

This sequence belongs to the zinc-containing alcohol dehydrogenase family. In terms of assembly, homotetramer. The cofactor is Zn(2+).

It is found in the cytoplasm. The enzyme catalyses L-threonine + NAD(+) = (2S)-2-amino-3-oxobutanoate + NADH + H(+). The protein operates within amino-acid degradation; L-threonine degradation via oxydo-reductase pathway; glycine from L-threonine: step 1/2. Catalyzes the NAD(+)-dependent oxidation of L-threonine to 2-amino-3-ketobutyrate. This chain is L-threonine 3-dehydrogenase, found in Escherichia coli O127:H6 (strain E2348/69 / EPEC).